Reading from the N-terminus, the 169-residue chain is Ribosome maturation factor RimM (169 aa).

The region spanning 97–169 (EDEVYFKDLI…KIVVDWEYDY (73 aa)) is the PRC barrel domain.

Belongs to the RimM family. Binds ribosomal protein uS19.

Its subcellular location is the cytoplasm. An accessory protein needed during the final step in the assembly of 30S ribosomal subunit, possibly for assembly of the head region. Essential for efficient processing of 16S rRNA. May be needed both before and after RbfA during the maturation of 16S rRNA. It has affinity for free ribosomal 30S subunits but not for 70S ribosomes. This chain is Ribosome maturation factor RimM, found in Francisella tularensis subsp. tularensis (strain WY96-3418).